We begin with the raw amino-acid sequence, 613 residues long: Dihydroxy-acid dehydratase (613 aa).

Aspartate 81 contacts Mg(2+). Cysteine 122 contacts [2Fe-2S] cluster. Aspartate 123 and lysine 124 together coordinate Mg(2+). Residue lysine 124 is modified to N6-carboxylysine. Cysteine 195 contributes to the [2Fe-2S] cluster binding site. Glutamate 491 contacts Mg(2+). Serine 517 acts as the Proton acceptor in catalysis.

Belongs to the IlvD/Edd family. Homodimer. [2Fe-2S] cluster is required as a cofactor. Requires Mg(2+) as cofactor.

It carries out the reaction (2R)-2,3-dihydroxy-3-methylbutanoate = 3-methyl-2-oxobutanoate + H2O. It catalyses the reaction (2R,3R)-2,3-dihydroxy-3-methylpentanoate = (S)-3-methyl-2-oxopentanoate + H2O. The protein operates within amino-acid biosynthesis; L-isoleucine biosynthesis; L-isoleucine from 2-oxobutanoate: step 3/4. It participates in amino-acid biosynthesis; L-valine biosynthesis; L-valine from pyruvate: step 3/4. Functions in the biosynthesis of branched-chain amino acids. Catalyzes the dehydration of (2R,3R)-2,3-dihydroxy-3-methylpentanoate (2,3-dihydroxy-3-methylvalerate) into 2-oxo-3-methylpentanoate (2-oxo-3-methylvalerate) and of (2R)-2,3-dihydroxy-3-methylbutanoate (2,3-dihydroxyisovalerate) into 2-oxo-3-methylbutanoate (2-oxoisovalerate), the penultimate precursor to L-isoleucine and L-valine, respectively. This Vibrio cholerae serotype O1 (strain ATCC 39541 / Classical Ogawa 395 / O395) protein is Dihydroxy-acid dehydratase.